The primary structure comprises 1097 residues: Error-prone DNA polymerase (1097 aa).

The interval 1039–1097 (PTGRGDEFAHGSPGGGDSRDRSPPKPRDIVVPLCRARHKGIDPEPETMPSAFPKPRDFR) is disordered. Over residues 1055-1066 (DSRDRSPPKPRD) the composition is skewed to basic and acidic residues.

This sequence belongs to the DNA polymerase type-C family. DnaE2 subfamily.

It localises to the cytoplasm. It carries out the reaction DNA(n) + a 2'-deoxyribonucleoside 5'-triphosphate = DNA(n+1) + diphosphate. In terms of biological role, DNA polymerase involved in damage-induced mutagenesis and translesion synthesis (TLS). It is not the major replicative DNA polymerase. The protein is Error-prone DNA polymerase of Allorhizobium ampelinum (strain ATCC BAA-846 / DSM 112012 / S4) (Agrobacterium vitis (strain S4)).